Reading from the N-terminus, the 194-residue chain is A-type ATP synthase subunit E (194 aa).

It belongs to the V-ATPase E subunit family. Has multiple subunits with at least A(3), B(3), C, D, E, F, H, I and proteolipid K(x).

It is found in the cell membrane. Functionally, component of the A-type ATP synthase that produces ATP from ADP in the presence of a proton gradient across the membrane. This chain is A-type ATP synthase subunit E, found in Saccharolobus islandicus (strain M.16.27) (Sulfolobus islandicus).